The sequence spans 317 residues: Glycerol-3-phosphate dehydrogenase [NAD(P)+] (317 aa).

NADPH contacts are provided by Trp20, Arg40, Arg41, and Lys88. Residues Lys88 and Gly116 each coordinate sn-glycerol 3-phosphate. Residue Ser120 coordinates NADPH. Sn-glycerol 3-phosphate is bound by residues Lys171, Asp224, Ser234, Arg235, and Asn236. The Proton acceptor role is filled by Lys171. Residue Arg235 participates in NADPH binding. Glu261 is an NADPH binding site.

This sequence belongs to the NAD-dependent glycerol-3-phosphate dehydrogenase family.

It is found in the cytoplasm. It catalyses the reaction sn-glycerol 3-phosphate + NAD(+) = dihydroxyacetone phosphate + NADH + H(+). It carries out the reaction sn-glycerol 3-phosphate + NADP(+) = dihydroxyacetone phosphate + NADPH + H(+). It functions in the pathway membrane lipid metabolism; glycerophospholipid metabolism. Catalyzes the reduction of the glycolytic intermediate dihydroxyacetone phosphate (DHAP) to sn-glycerol 3-phosphate (G3P), the key precursor for phospholipid synthesis. This chain is Glycerol-3-phosphate dehydrogenase [NAD(P)+], found in Synechocystis sp. (strain ATCC 27184 / PCC 6803 / Kazusa).